Reading from the N-terminus, the 332-residue chain is Zinc finger protein CONSTANS-LIKE 13 (332 aa).

Residues cysteine 13, cysteine 16, cysteine 36, histidine 41, cysteine 56, cysteine 59, cysteine 79, and histidine 84 each contribute to the Zn(2+) site. The B box-type 1; atypical zinc finger occupies 13 to 55 (CDYCDSSVALVYCKADSAKLCLACDKQVHVANQLFAKHFRSLL). A B box-type 2; atypical zinc finger spans residues 56–96 (CDSCNESPSSLFCETERSVLCQNCDWQHHTASSSLHSRRPF). One can recognise a CCT domain in the interval 287–329 (RNSALSRYKEKKKSRRYEKHIRYESRKVRAESRTRIRGRFAKA).

Belongs to the CONSTANS family.

Its subcellular location is the nucleus. The protein is Zinc finger protein CONSTANS-LIKE 13 (COL13) of Arabidopsis thaliana (Mouse-ear cress).